The primary structure comprises 407 residues: MAQTLAAASLVLVPLVTAQQIGSIAENHPELKTYRCGSQAGCVAQSTSVVLDINAHWIHQMGAQTSCTTSSGLDPSLCPDKVTCSQNCVVEGITDYSSFGVQNSGDAITLRQYQVQNGQIKTLRPRVYLLAEDGINYSKLQLLNQEFTFDVDASKLPCGMNGALYLSEMDASGGRSALNPAGATYGTGYCDAQCFNPGPWINGEANTLGAGACCQEMDLWEANSRSTIFSPHPCTTAGLYACTGAECYSICDGYGCTYNPYELGAKDYYGYGLTVDTAKPITVVTQFVTADNTATGTLAEIRRLYVQEGMVIGNSAVAMTEAFCSSSRTFEALGGLQRMGEALGRGMVPVFSIWDDPSLWMHWLDSDGAGPCGSTEGDPAFIQANYPNTAVTFSKVRWGDIDSTYSV.

The signal sequence occupies residues 1–18 (MAQTLAAASLVLVPLVTA). An N-linked (GlcNAc...) asparagine glycan is attached at Asn136. Glu216 (nucleophile) is an active-site residue. Residue Glu221 is the Proton donor of the active site.

It belongs to the glycosyl hydrolase 7 (cellulase C) family.

The protein resides in the secreted. It catalyses the reaction Endohydrolysis of (1-&gt;4)-beta-D-glucosidic linkages in cellulose, lichenin and cereal beta-D-glucans.. Its function is as follows. Has endoglucanase activity on substrates containing beta-1,4 glycosidic bonds, like in carboxymethylcellulose (CMC), hydroxyethylcellulose (HEC) and beta-glucan. Involved in the degradation of complex natural cellulosic substrates. The sequence is that of Probable endo-beta-1,4-glucanase celB (celB) from Aspergillus fumigatus (strain ATCC MYA-4609 / CBS 101355 / FGSC A1100 / Af293) (Neosartorya fumigata).